The following is a 491-amino-acid chain: Aspartyl/glutamyl-tRNA(Asn/Gln) amidotransferase subunit B (491 aa).

It belongs to the GatB/GatE family. GatB subfamily. Heterotrimer of A, B and C subunits.

The catalysed reaction is L-glutamyl-tRNA(Gln) + L-glutamine + ATP + H2O = L-glutaminyl-tRNA(Gln) + L-glutamate + ADP + phosphate + H(+). It carries out the reaction L-aspartyl-tRNA(Asn) + L-glutamine + ATP + H2O = L-asparaginyl-tRNA(Asn) + L-glutamate + ADP + phosphate + 2 H(+). Its function is as follows. Allows the formation of correctly charged Asn-tRNA(Asn) or Gln-tRNA(Gln) through the transamidation of misacylated Asp-tRNA(Asn) or Glu-tRNA(Gln) in organisms which lack either or both of asparaginyl-tRNA or glutaminyl-tRNA synthetases. The reaction takes place in the presence of glutamine and ATP through an activated phospho-Asp-tRNA(Asn) or phospho-Glu-tRNA(Gln). This chain is Aspartyl/glutamyl-tRNA(Asn/Gln) amidotransferase subunit B, found in Paraburkholderia phytofirmans (strain DSM 17436 / LMG 22146 / PsJN) (Burkholderia phytofirmans).